The following is a 103-amino-acid chain: Large ribosomal subunit protein bL21 (103 aa).

It belongs to the bacterial ribosomal protein bL21 family. In terms of assembly, part of the 50S ribosomal subunit. Contacts protein L20.

Its function is as follows. This protein binds to 23S rRNA in the presence of protein L20. This is Large ribosomal subunit protein bL21 from Chloroflexus aggregans (strain MD-66 / DSM 9485).